The primary structure comprises 168 residues: Endoribonuclease YbeY (168 aa).

H126, H130, and H136 together coordinate Zn(2+).

It belongs to the endoribonuclease YbeY family. Zn(2+) serves as cofactor.

It localises to the cytoplasm. In terms of biological role, single strand-specific metallo-endoribonuclease involved in late-stage 70S ribosome quality control and in maturation of the 3' terminus of the 16S rRNA. The protein is Endoribonuclease YbeY of Sinorhizobium medicae (strain WSM419) (Ensifer medicae).